The chain runs to 128 residues: Azurin (128 aa).

Residues 1–128 (AECSVDIQGN…AMMKGTLTLK (128 aa)) enclose the Plastocyanin-like domain. Cu cation-binding residues include His46, Cys112, His117, and Met121.

It localises to the periplasm. Its function is as follows. Transfers electrons from cytochrome c551 to cytochrome oxidase. The chain is Azurin from Pseudomonas denitrificans.